Reading from the N-terminus, the 136-residue chain is Antistasin (136 aa).

The N-terminal stretch at 1 to 17 is a signal peptide; sequence MIKLAILLLFTVAIVRC. Residue Gln-18 is modified to Pyrrolidone carboxylic acid. Cystine bridges form between Cys-25-Cys-36, Cys-30-Cys-43, Cys-45-Cys-65, Cys-50-Cys-68, Cys-54-Cys-70, Cys-79-Cys-90, Cys-84-Cys-97, Cys-99-Cys-120, Cys-105-Cys-123, and Cys-109-Cys-125. An Antistasin-like 1 domain is found at 45–70; that stretch reads CSGVRCRMHCPHGFQRSRYGCEFCKC. An Antistasin-like 2 domain is found at 100-125; sequence KIDINCRKTCPNGLKRDKLGCEYCEC. Residues 114 to 117 and 128 to 135 each bind heparin; these read KRDK and KRKLIPRL.

This sequence belongs to the protease inhibitor I15 (antistasin) family.

It localises to the secreted. Its function is as follows. This highly disulfide-bonded protein is a potent inhibitor of factor Xa. May have therapeutic utility as an anticoagulant. Also exhibits a strong metastatic activity. In Haementeria officinalis (Mexican leech), this protein is Antistasin.